The following is a 135-amino-acid chain: Holo-[acyl-carrier-protein] synthase (135 aa).

Mg(2+) contacts are provided by Asp8 and Glu57.

The protein belongs to the P-Pant transferase superfamily. AcpS family. Mg(2+) is required as a cofactor.

It localises to the cytoplasm. The catalysed reaction is apo-[ACP] + CoA = holo-[ACP] + adenosine 3',5'-bisphosphate + H(+). Functionally, transfers the 4'-phosphopantetheine moiety from coenzyme A to a Ser of acyl-carrier-protein. The sequence is that of Holo-[acyl-carrier-protein] synthase from Xanthobacter autotrophicus (strain ATCC BAA-1158 / Py2).